A 96-amino-acid polypeptide reads, in one-letter code: UPF0235 protein YpsIP31758_0827 (96 aa).

Belongs to the UPF0235 family.

The protein is UPF0235 protein YpsIP31758_0827 of Yersinia pseudotuberculosis serotype O:1b (strain IP 31758).